The chain runs to 615 residues: RUN domain-containing protein 1 (615 aa).

A disordered region spans residues 15–41 (TAVGPKAKDEEEEEEEEESLPPCETVR). Residues 24-33 (EEEEEEEEES) are compositionally biased toward acidic residues. Position 73 is a phosphoserine (Ser73). Coiled coils occupy residues 76–102 (DATVRTLRRLEAERRQLDSALLALSSH) and 163–238 (RVRG…NLNE). The interval 147–180 (DPCGGDESDVLPGDRPRVRGEDQSEQEKRERLET) is disordered. The span at 158-180 (PGDRPRVRGEDQSEQEKRERLET) shows a compositional bias: basic and acidic residues. The region spanning 423-604 (ELTTVVRKEL…LKFSLPVDLA (182 aa)) is the RUN domain. Ser499 carries the post-translational modification Phosphoserine.

In terms of biological role, may play a role as p53/TP53 inhibitor and thus may have oncogenic activity. This Mus musculus (Mouse) protein is RUN domain-containing protein 1 (Rundc1).